We begin with the raw amino-acid sequence, 504 residues long: Ribonuclease Y (504 aa).

The helical transmembrane segment at 2–22 threads the bilayer; the sequence is TTSIVIGVVLVTVGLTFGWTI. Residues 194 to 279 enclose the KH domain; that stretch reads TVSTVNLPSE…EIVQKVTQEV (86 aa). In terms of domain architecture, HD spans 320–413; the sequence is VLYHSKEVAL…VQVADAISAA (94 aa).

Belongs to the RNase Y family.

Its subcellular location is the cell membrane. Endoribonuclease that initiates mRNA decay. In Treponema pallidum (strain Nichols), this protein is Ribonuclease Y.